A 430-amino-acid polypeptide reads, in one-letter code: Tol-Pal system protein TolB (430 aa).

A signal peptide spans methionine 1–alanine 21.

The protein belongs to the TolB family. The Tol-Pal system is composed of five core proteins: the inner membrane proteins TolA, TolQ and TolR, the periplasmic protein TolB and the outer membrane protein Pal. They form a network linking the inner and outer membranes and the peptidoglycan layer.

The protein localises to the periplasm. Part of the Tol-Pal system, which plays a role in outer membrane invagination during cell division and is important for maintaining outer membrane integrity. TolB occupies a key intermediary position in the Tol-Pal system because it communicates directly with both membrane-embedded components, Pal in the outer membrane and TolA in the inner membrane. The protein is Tol-Pal system protein TolB of Salmonella enteritidis PT4 (strain P125109).